The following is a 431-amino-acid chain: MDIISQCPDHLLLRILSFIPTKDVIVTSLLSKRWGSLWRWVPKLEYDFTRQNMRFVKFVYRSLLQNNAPVLESLHLKNIILYAECRTVDIGGWIDIAVSRRVRELEISINCSDEKFRLPSSLYTCGTLESFILTIKHCHLVDVPLAVCLPSLKKLHLRCIGWAYNATLLRLISGCTNLEELRLARPDDDGDYIMIHEAGSTIDYMSIFERRYMFEFMFDQMFGKGSSNGINAPLKYFSISNNYRIHNFRGIEKMPDWVEARIAVTGGSHKYLKEITYAKGLYVCLSVSEVMNPYDMIFHMLVDLTICTCTQGWWDLLTHMLQGSPKLRFLTLTNDHCRELPSLETPACWKRPSSVPACLLSSLQAFTWSGYKGRQGDKEVVKYVLRNATGLKKRIFISKSNDFGEKFCMLQELASVPTPSPSCQLLFDRIF.

An F-box domain is found at 1–47 (MDIISQCPDHLLLRILSFIPTKDVIVTSLLSKRWGSLWRWVPKLEYD). LRR repeat units follow at residues 52–78 (NMRFVKFVYRSLLQNNAPVLESLHLKN), 85–109 (CRTVDIGGWIDIAVSRRVRELEISI), 132–159 (ILTIKHCHLVDVPLAVCLPSLKKLHLRC), 160–185 (IGWAYNATLLRLISGCTNLEELRLAR), and 309–334 (CTQGWWDLLTHMLQGSPKLRFLTLTN). The FBD domain maps to 348 to 398 (CWKRPSSVPACLLSSLQAFTWSGYKGRQGDKEVVKYVLRNATGLKKRIFIS).

This chain is Putative F-box/FBD/LRR-repeat protein At4g26350, found in Arabidopsis thaliana (Mouse-ear cress).